An 80-amino-acid chain; its full sequence is Transcription elongation factor 1 homolog (80 aa).

Residues C25, C28, C49, and C52 each contribute to the Zn(2+) site.

This sequence belongs to the ELOF1 family.

The protein resides in the nucleus. In terms of biological role, transcription elongation factor implicated in the maintenance of proper chromatin structure in actively transcribed regions. In Encephalitozoon cuniculi (strain GB-M1) (Microsporidian parasite), this protein is Transcription elongation factor 1 homolog.